Reading from the N-terminus, the 196-residue chain is Nucleoside triphosphate pyrophosphatase (196 aa).

The Proton acceptor role is filled by D73.

Belongs to the Maf family. A divalent metal cation is required as a cofactor.

The protein resides in the cytoplasm. The catalysed reaction is a ribonucleoside 5'-triphosphate + H2O = a ribonucleoside 5'-phosphate + diphosphate + H(+). The enzyme catalyses a 2'-deoxyribonucleoside 5'-triphosphate + H2O = a 2'-deoxyribonucleoside 5'-phosphate + diphosphate + H(+). Functionally, nucleoside triphosphate pyrophosphatase. May have a dual role in cell division arrest and in preventing the incorporation of modified nucleotides into cellular nucleic acids. The sequence is that of Nucleoside triphosphate pyrophosphatase from Maricaulis maris (strain MCS10) (Caulobacter maris).